The primary structure comprises 59 residues: uncharacterized protein (59 aa).

Residues 7–24 form a helical membrane-spanning segment; it reads FLLVFIILAQLLSCTPSA.

The protein localises to the membrane. This is an uncharacterized protein from Rickettsia prowazekii (strain Madrid E).